The following is a 429-amino-acid chain: Glutamyl-tRNA reductase (429 aa).

Residues 50–53, Ser-116, 121–123, and Gln-127 each bind substrate; these read TCNR and EPQ. Residue Cys-51 is the Nucleophile of the active site. NADP(+) is bound at residue 196 to 201; it reads GAGEMA.

Belongs to the glutamyl-tRNA reductase family. In terms of assembly, homodimer.

It catalyses the reaction (S)-4-amino-5-oxopentanoate + tRNA(Glu) + NADP(+) = L-glutamyl-tRNA(Glu) + NADPH + H(+). The protein operates within porphyrin-containing compound metabolism; protoporphyrin-IX biosynthesis; 5-aminolevulinate from L-glutamyl-tRNA(Glu): step 1/2. In terms of biological role, catalyzes the NADPH-dependent reduction of glutamyl-tRNA(Glu) to glutamate 1-semialdehyde (GSA). The polypeptide is Glutamyl-tRNA reductase (Thermodesulfovibrio yellowstonii (strain ATCC 51303 / DSM 11347 / YP87)).